We begin with the raw amino-acid sequence, 249 residues long: 2,3-bisphosphoglycerate-dependent phosphoglycerate mutase (249 aa).

Substrate-binding positions include 9-16, 22-23, Arg-61, 88-91, Lys-99, 115-116, and 184-185; these read RHGESEWN, TG, ERHY, RR, and GN. His-10 (tele-phosphohistidine intermediate) is an active-site residue. The active-site Proton donor/acceptor is Glu-88.

This sequence belongs to the phosphoglycerate mutase family. BPG-dependent PGAM subfamily.

The catalysed reaction is (2R)-2-phosphoglycerate = (2R)-3-phosphoglycerate. Its pathway is carbohydrate degradation; glycolysis; pyruvate from D-glyceraldehyde 3-phosphate: step 3/5. Its function is as follows. Catalyzes the interconversion of 2-phosphoglycerate and 3-phosphoglycerate. In Cutibacterium acnes (strain DSM 16379 / KPA171202) (Propionibacterium acnes), this protein is 2,3-bisphosphoglycerate-dependent phosphoglycerate mutase.